We begin with the raw amino-acid sequence, 944 residues long: Trehalose monomycolate exporter MmpL3 (944 aa).

Topologically, residues 1–13 (MFAWWGRTVYRYR) are cytoplasmic. The helical transmembrane segment at 14–34 (FIVIGVMVALCLGGGVFGLSL) threads the bilayer. The Periplasmic segment spans residues 35-185 (GKHVTQSGFY…TIATDQRRME (151 aa)). 40–44 (QSGFY) contributes to the a 1,2-diacylglycero-3-phosphoethanolamine binding site. Residues 186 to 206 (VLALPLVAVVLFFVFGGVIAA) traverse the membrane as a helical segment. Over 207–209 (GLP) the chain is Cytoplasmic. A helical transmembrane segment spans residues 210–230 (VMVGGLCIAGALGIMRFLAIF). At 231-235 (GPVHY) the chain is on the periplasmic side. A helical membrane pass occupies residues 236 to 256 (FAQPVVSLIGLGIAIDYGLFI). Residues 257–286 (VSRFREEIAEGYDTETAVRRTVITAGRTVT) lie on the Cytoplasmic side of the membrane. The helical transmembrane segment at 287-307 (FSAVLIVASAIGLLLFPQGFL) threads the bilayer. Residues 308–314 (KSLTYAT) lie on the Periplasmic side of the membrane. A helical transmembrane segment spans residues 315–335 (IASVMLSAILSITVLPACLGI). The Cytoplasmic segment spans residues 336-396 (LGKHVDALGV…KLVNRVMKRP (61 aa)). The helical transmembrane segment at 397–417 (VLFAAPIVIIMILLIIPVGKL) threads the bilayer. Residues 418-562 (SLGGISEKYL…HGLFAKMPLM (145 aa)) are Periplasmic-facing. Residues 563 to 583 (VVILLTTTIVLMFLAFGSVVL) traverse the membrane as a helical segment. The Cytoplasmic segment spans residues 584–586 (PIK). A helical membrane pass occupies residues 587 to 607 (ATLMSALTLGSTMGILTWIFV). The Periplasmic portion of the chain corresponds to 608–616 (DGHFSKWLN). A helical membrane pass occupies residues 617 to 637 (FTPTPLTAPVIGLIIALVFGL). Residues 638 to 672 (STDYEVFLVSRMVEARERGMSTQEAIRIGTAATGR) lie on the Cytoplasmic side of the membrane. The helical transmembrane segment at 673 to 693 (IITAAALIVAVVAGAFVFSDL) threads the bilayer. Topologically, residues 694-698 (VMMKY) are periplasmic. Residues 699–719 (LAFGLMAALLLDATVVRMFLV) traverse the membrane as a helical segment. Over 720 to 944 (PSVMKLLGDD…QDLLRREGRL (225 aa)) the chain is Cytoplasmic. The disordered stretch occupies residues 778–944 (AAGDPRPPHD…QDLLRREGRL (167 aa)). Residues 791–828 (PLAESPRPARSSPASSPELTPALEATAAPAAPSGASTT) are compositionally biased toward low complexity. The segment covering 829-839 (RMQIGSSTEPP) has biased composition (polar residues). The span at 855 to 866 (STPPPTPTPPSA) shows a compositional bias: pro residues.

It belongs to the resistance-nodulation-cell division (RND) (TC 2.A.6) family. MmpL subfamily. Monomer. Interacts with TtfA (via N-terminus); active trehalose monomycolate (TMM) biosynthesis is not required for the complex formation.

The protein localises to the cell inner membrane. The protein resides in the cell septum. It is found in the cell tip. Its activity is regulated as follows. Inhibited by the antitubercular drug SQ109. Also inhibited by several other compounds such as the pyrrole derivative BM212, the adamantyl urea derivative AU1235, the benzimidazole C215, indoleamides, tetrahydropyrazolo[1,5-a]pyrimidine-3-carboxamide (THPP) and N-benzyl-6',7'-dihydrospiro[piperidine-4,4'-thieno[3,2-c]pyran] (Spiro) analogs. Inhibitory effects of these compounds, including SQ109, are most likely due to their ability to dissipate the transmembrane electrochemical proton gradient. In terms of biological role, transports trehalose monomycolate (TMM) to the cell wall. Flips TMM across the inner membrane. Membrane potential is not required for this function. Transports probably phosphatidylethanolamine (PE) as well. Binds specifically both TMM and PE, but not trehalose dimycolate (TDM). Also binds diacylglycerol (DAG) and other phospholipids, including phosphatidylglycerol (PG), phosphatidylinositol (PI), and cardiolipin (CDL). Contributes to membrane potential, cell wall composition, antibiotic susceptibility and fitness. Could also be part of a heme-iron acquisition system. Is the target of the antitubercular drug SQ109. In Mycobacterium tuberculosis (strain ATCC 25618 / H37Rv), this protein is Trehalose monomycolate exporter MmpL3 (mmpL3).